Reading from the N-terminus, the 402-residue chain is S-adenosylmethionine synthase (402 aa).

Residue 137 to 142 participates in ATP binding; it reads GQGSAD.

The protein belongs to the AdoMet synthase 2 family. Mg(2+) is required as a cofactor.

The catalysed reaction is L-methionine + ATP + H2O = S-adenosyl-L-methionine + phosphate + diphosphate. It participates in amino-acid biosynthesis; S-adenosyl-L-methionine biosynthesis; S-adenosyl-L-methionine from L-methionine: step 1/1. Catalyzes the formation of S-adenosylmethionine from methionine and ATP. This is S-adenosylmethionine synthase from Pyrobaculum islandicum (strain DSM 4184 / JCM 9189 / GEO3).